A 1648-amino-acid polypeptide reads, in one-letter code: Kinesin-like protein KIF14 (1648 aa).

A disordered region spans residues 1–27; sequence MSLHSTHNRNNSGDILDIPSSQNSSSL. A required for PRC1-binding region spans residues 1 to 356; sequence MSLHSTHNRN…AGKDPLKVEN (356 aa). 2 positions are modified to phosphoserine: serine 12 and serine 272. Residue threonine 277 is modified to Phosphothreonine. Phosphoserine is present on serine 346. A required for microtubule-binding with high affinity region spans residues 356–737; that stretch reads NSQVTVAVRV…AAQRNSRNID (382 aa). The 344-residue stretch at 358-701 folds into the Kinesin motor domain; the sequence is QVTVAVRVRP…LRYANQARLI (344 aa). An ATP-binding site is contributed by 447-454; it reads GQTGSGKS. Residues 705–791 adopt a coiled-coil conformation; the sequence is AKVNEDMNAK…QETKELQKAG (87 aa). An FHA domain is found at 825-891; the sequence is TTVGKYKPNS…LRHGDRVILG (67 aa). The required for CIT-binding stretch occupies residues 901 to 1648; sequence PVEVQKGKRP…ECTPSRIQWV (748 aa). Position 915 is a phosphothreonine (threonine 915). A coiled-coil region spans residues 922–1079; sequence KDFEFAKNEL…QNRNNRDKTF (158 aa). Serine 937 and serine 1292 each carry phosphoserine. Coiled-coil stretches lie at residues 1332–1348 and 1468–1500; these read TNIA…VKKL and ENIF…VNRA. The tract at residues 1600-1648 is disordered; it reads NTKEEHQQSKSSGIDGSKNKGVPKRVYELHGSSPAVSSEECTPSRIQWV. The span at 1633-1648 shows a compositional bias: polar residues; sequence PAVSSEECTPSRIQWV.

It belongs to the TRAFAC class myosin-kinesin ATPase superfamily. Kinesin family. In terms of assembly, directly interacts with PRC1 within a complex also containing KIF4A, KIF20A and KIF23; targets to the central spindle. Directly interacts with CIT depending on the activation state of the kinase (stronger interaction with the kinase-dead form); targets to the midbody. Interacts with ARRB2; the interaction is detected in the nucleus upon OR1D2 stimulation. Interacts with AKT1; the interaction is detected in the plasma membrane upon INS stimulation and promotes AKT1 phosphorylation. Interacts with SVIL; at midbody during cytokinesis. Interacts with RADIL (via PDZ domain); recruits RADIL to the microtubule network restricting RADIL from interaction with activated RAP1A.

The protein localises to the nucleus. It is found in the cytoplasm. The protein resides in the cytoskeleton. Its subcellular location is the spindle. It localises to the midbody. Functionally, microtubule motor protein that binds to microtubules with high affinity through each tubulin heterodimer and has an ATPase activity. Plays a role in many processes like cell division, cytokinesis and also in cell proliferation and apoptosis. During cytokinesis, targets to central spindle and midbody through its interaction with PRC1 and CIT respectively. Regulates cell growth through regulation of cell cycle progression and cytokinesis. During cell cycle progression acts through SCF-dependent proteasomal ubiquitin-dependent protein catabolic process which controls CDKN1B degradation, resulting in positive regulation of cyclins, including CCNE1, CCND1 and CCNB1. During late neurogenesis, regulates the cerebellar, cerebral cortex and olfactory bulb development through regulation of apoptosis, cell proliferation and cell division. Also is required for chromosome congression and alignment during mitotic cell cycle process. Regulates cell spreading, focal adhesion dynamics, and cell migration through its interaction with RADIL resulting in regulation of RAP1A-mediated inside-out integrin activation by tethering RADIL on microtubules. The protein is Kinesin-like protein KIF14 of Homo sapiens (Human).